A 129-amino-acid chain; its full sequence is MAKLTTEELLAAFEELTLIELSEFIKAFEEKFDVTAAAPVAVAAAGGAAGGAEAAAAEEKDEFDVILEAAGDKKIGVIKEVRALTSLGLKEAKDLVDGAPKPILEGVNKETAEKAKEQLEGAGATVTLK.

The protein belongs to the bacterial ribosomal protein bL12 family. Homodimer. Part of the ribosomal stalk of the 50S ribosomal subunit. Forms a multimeric L10(L12)X complex, where L10 forms an elongated spine to which 2 to 4 L12 dimers bind in a sequential fashion. Binds GTP-bound translation factors.

Forms part of the ribosomal stalk which helps the ribosome interact with GTP-bound translation factors. Is thus essential for accurate translation. The protein is Large ribosomal subunit protein bL12 of Micrococcus luteus (strain ATCC 4698 / DSM 20030 / JCM 1464 / CCM 169 / CCUG 5858 / IAM 1056 / NBRC 3333 / NCIMB 9278 / NCTC 2665 / VKM Ac-2230) (Micrococcus lysodeikticus).